A 144-amino-acid chain; its full sequence is HTH-type transcriptional repressor NsrR (144 aa).

The region spanning 2 to 129 is the HTH rrf2-type domain; it reads QLTSFTDYGL…DKHTLLSLID (128 aa). Residues 28–51 constitute a DNA-binding region (H-T-H motif); sequence ISKVTEVYGVSRNHMVKIINKLGQ. 3 residues coordinate [2Fe-2S] cluster: cysteine 91, cysteine 96, and cysteine 102.

Requires [2Fe-2S] cluster as cofactor.

In terms of biological role, nitric oxide-sensitive repressor of genes involved in protecting the cell against nitrosative stress. May require iron for activity. The sequence is that of HTH-type transcriptional repressor NsrR from Photobacterium profundum (strain SS9).